The primary structure comprises 231 residues: GDSL lipase Rv0518 (231 aa).

Residues 1 to 20 (MSRPGTYVIGLTLLVGLVVG) form the signal peptide. Catalysis depends on Ser46, which acts as the Nucleophile. Residue Asp205 is the Proton donor of the active site. His208 serves as the catalytic Proton acceptor.

It belongs to the 'GDSL' lipolytic enzyme family.

It localises to the secreted. Its subcellular location is the cell wall. It is found in the extracellular space. It catalyses the reaction a fatty acid ester + H2O = an aliphatic alcohol + a fatty acid + H(+). The catalysed reaction is decanoate ester + H2O = decanoate + an aliphatic alcohol + H(+). The enzyme catalyses an octanoate ester + H2O = an aliphatic alcohol + octanoate + H(+). It carries out the reaction a dodecanoate ester + H2O = an aliphatic alcohol + dodecanoate + H(+). It catalyses the reaction a tetradecanoate ester + H2O = an aliphatic alcohol + tetradecanoate + H(+). Its activity is regulated as follows. Activity is inhibited by the serine modifier phenylmethylsulfonyl fluoride (PMSF). In terms of biological role, GDSL lipase that catalyzes the hydrolysis of p-nitrophenyl (pNP) esters. pNP-decanoate (C10) is the preferred substrate. It can also use pNP-octanoate (C8), pNP-dodecanoate (C12) and pNP-tetradecanoate (C14). Has lower activity with pNP-butyrate (C4), pNP-palmitate (C16) and pNP-stearate (C18). Does not show phospholipase A1 activity. Might help bacteria to utilize available lipids for its growth as well as provide resistance to various intracellular stresses by cell wall modulation resulting in enhanced intracellular survival. This Mycobacterium tuberculosis (strain ATCC 25618 / H37Rv) protein is GDSL lipase Rv0518.